We begin with the raw amino-acid sequence, 287 residues long: Protease HtpX (287 aa).

Helical transmembrane passes span 4-24 (ILLF…VLNI) and 36-56 (LSGL…ISLL). His143 contacts Zn(2+). Glu144 is a catalytic residue. Residue His147 coordinates Zn(2+). The next 2 helical transmembrane spans lie at 158–178 (LMQG…ANIV) and 192–212 (MVYF…ASFI). Residue Glu221 participates in Zn(2+) binding.

The protein belongs to the peptidase M48B family. The cofactor is Zn(2+).

The protein localises to the cell inner membrane. The chain is Protease HtpX from Vibrio cholerae serotype O1 (strain ATCC 39315 / El Tor Inaba N16961).